The sequence spans 348 residues: Nicotinate-nucleotide--dimethylbenzimidazole phosphoribosyltransferase (348 aa).

Glu-316 acts as the Proton acceptor in catalysis.

It belongs to the CobT family.

The catalysed reaction is 5,6-dimethylbenzimidazole + nicotinate beta-D-ribonucleotide = alpha-ribazole 5'-phosphate + nicotinate + H(+). It functions in the pathway nucleoside biosynthesis; alpha-ribazole biosynthesis; alpha-ribazole from 5,6-dimethylbenzimidazole: step 1/2. Catalyzes the synthesis of alpha-ribazole-5'-phosphate from nicotinate mononucleotide (NAMN) and 5,6-dimethylbenzimidazole (DMB). This Xanthomonas axonopodis pv. citri (strain 306) protein is Nicotinate-nucleotide--dimethylbenzimidazole phosphoribosyltransferase.